The following is a 347-amino-acid chain: UDP-3-O-acylglucosamine N-acyltransferase 1 (347 aa).

Catalysis depends on His246, which acts as the Proton acceptor.

The protein belongs to the transferase hexapeptide repeat family. LpxD subfamily. In terms of assembly, homotrimer.

It catalyses the reaction a UDP-3-O-[(3R)-3-hydroxyacyl]-alpha-D-glucosamine + a (3R)-hydroxyacyl-[ACP] = a UDP-2-N,3-O-bis[(3R)-3-hydroxyacyl]-alpha-D-glucosamine + holo-[ACP] + H(+). It functions in the pathway bacterial outer membrane biogenesis; LPS lipid A biosynthesis. Its function is as follows. Catalyzes the N-acylation of UDP-3-O-acylglucosamine using 3-hydroxyacyl-ACP as the acyl donor. Is involved in the biosynthesis of lipid A, a phosphorylated glycolipid that anchors the lipopolysaccharide to the outer membrane of the cell. The chain is UDP-3-O-acylglucosamine N-acyltransferase 1 from Francisella tularensis subsp. tularensis (strain SCHU S4 / Schu 4).